Reading from the N-terminus, the 512-residue chain is Glycerol kinase 2 (512 aa).

T18 is a binding site for ADP. Residues T18, T19, and S20 each coordinate ATP. T18 serves as a coordination point for sn-glycerol 3-phosphate. Position 22 (R22) interacts with ADP. 4 residues coordinate sn-glycerol 3-phosphate: R88, E89, Y140, and D255. Positions 88, 89, 140, 255, and 256 each coordinate glycerol. Positions 277 and 321 each coordinate ADP. Residues T277, G321, Q325, and G422 each contribute to the ATP site. Residues G422 and N426 each coordinate ADP.

The protein belongs to the FGGY kinase family.

The enzyme catalyses glycerol + ATP = sn-glycerol 3-phosphate + ADP + H(+). The protein operates within polyol metabolism; glycerol degradation via glycerol kinase pathway; sn-glycerol 3-phosphate from glycerol: step 1/1. Its activity is regulated as follows. Inhibited by fructose 1,6-bisphosphate (FBP). Its function is as follows. Key enzyme in the regulation of glycerol uptake and metabolism. Catalyzes the phosphorylation of glycerol to yield sn-glycerol 3-phosphate. In Streptomyces coelicolor (strain ATCC BAA-471 / A3(2) / M145), this protein is Glycerol kinase 2.